We begin with the raw amino-acid sequence, 466 residues long: MSEQKSSNQMWGGRFASGPDAIMEEINASIGFDRKLYAQDIQGSLAHAAMLAKTGIIAAEDHKQIENGLKTIRKEIEEGKFTFSRKLEDIHMNIEARLAELIGPAAGRLHTARSRNDQVAVDFRLWVKQELEKTAAALKNLIEAFLERAEEHAATVMPGFTHLQTAQPVTFGHHCMAYVEMFGRDLSRVRDAIERMDESPLGAAALAGTGFPIDRHMTAKALGFREPTRNSLDSVSDRDYALEFLSLAAICAGHLSRLAEEIVIWSTPQFNFVRLSDAFSTGSSIMPQKKNPDAAELVRAKTGRINGSLVALLTIMKGLPLAYSKDMQEDKEQVFDAAENLELAIAAMAGMVRDLTVNVAAMKKAAGSGYSTATDLADWLVRTLGLPFREAHHVTGRAVALAESRKVDLAKLSLEELQSINPAITAEVFGYLTVEKSVKSRQSFGGTAPQEVRRQIRYWKKRIAKA.

It belongs to the lyase 1 family. Argininosuccinate lyase subfamily.

It localises to the cytoplasm. It carries out the reaction 2-(N(omega)-L-arginino)succinate = fumarate + L-arginine. The protein operates within amino-acid biosynthesis; L-arginine biosynthesis; L-arginine from L-ornithine and carbamoyl phosphate: step 3/3. This chain is Argininosuccinate lyase, found in Brucella canis (strain ATCC 23365 / NCTC 10854 / RM-666).